Consider the following 62-residue polypeptide: Large ribosomal subunit protein bL33 (62 aa).

It belongs to the bacterial ribosomal protein bL33 family.

This is Large ribosomal subunit protein bL33 from Trichodesmium erythraeum (strain IMS101).